A 168-amino-acid polypeptide reads, in one-letter code: Large ribosomal subunit protein bL9 (168 aa).

The interval 148-168 (ENGEGSVQPAAEAAEVASTEA) is disordered. Residues 157–168 (AAEAAEVASTEA) show a composition bias toward low complexity.

This sequence belongs to the bacterial ribosomal protein bL9 family.

In terms of biological role, binds to the 23S rRNA. This Herpetosiphon aurantiacus (strain ATCC 23779 / DSM 785 / 114-95) protein is Large ribosomal subunit protein bL9.